We begin with the raw amino-acid sequence, 165 residues long: AP-3 complex subunit sigma (165 aa).

Belongs to the adaptor complexes small subunit family. Adaptor protein complex 3 (AP-3) is a heterotetramer composed of 2 large adaptins (apl5 and apl6), a medium adaptin (apm3) and a small adaptin (aps3).

It localises to the golgi apparatus. The protein localises to the cytoplasmic vesicle membrane. Functionally, part of the AP-3 complex, an adaptor-related complex which is not clathrin-associated. The complex is associated with the Golgi region as well as more peripheral structures. It facilitates the budding of vesicles from the Golgi membrane and may be directly involved in trafficking to the vacuole. The protein is AP-3 complex subunit sigma (aps3) of Schizosaccharomyces pombe (strain 972 / ATCC 24843) (Fission yeast).